Here is a 227-residue protein sequence, read N- to C-terminus: Transcriptional regulatory protein TdiR (227 aa).

One can recognise a Response regulatory domain in the interval 11–125; the sequence is TVFVVDDEAS…DLLDAVNAAL (115 aa). The residue at position 60 (aspartate 60) is a 4-aspartylphosphate. One can recognise an HTH luxR-type domain in the interval 141–206; the sequence is HLDLLATLSQ…DLMHFVMRGS (66 aa). A DNA-binding region (H-T-H motif) is located at residues 165–184; that stretch reads SKEIAKLLGISYKTVEAHRG.

Phosphorylated by TdiS.

Its function is as follows. Member of the two-component regulatory system TdiR/TdiS, which probably regulates transcription of toluene catabolic genes (bss operon). Binds to DNA. The chain is Transcriptional regulatory protein TdiR (tdiR) from Thauera aromatica.